The primary structure comprises 644 residues: Macrolide export ATP-binding/permease protein MacB (644 aa).

In terms of domain architecture, ABC transporter spans 7–245 (IELQDITRSF…IPETDQNGRR (239 aa)). Position 43–50 (43–50 (GPSGSGKS)) interacts with ATP. Helical transmembrane passes span 271–291 (ALTL…LAIG), 526–546 (IAAI…LVSV), 570–590 (FLTE…VIGI), and 607–627 (LLPM…FGFL).

Belongs to the ABC transporter superfamily. Macrolide exporter (TC 3.A.1.122) family. Homodimer. Part of the tripartite efflux system MacAB-TolC, which is composed of an inner membrane transporter, MacB, a periplasmic membrane fusion protein, MacA, and an outer membrane component, TolC. The complex forms a large protein conduit and can translocate molecules across both the inner and outer membranes. Interacts with MacA.

Its subcellular location is the cell inner membrane. In terms of biological role, part of the tripartite efflux system MacAB-TolC. MacB is a non-canonical ABC transporter that contains transmembrane domains (TMD), which form a pore in the inner membrane, and an ATP-binding domain (NBD), which is responsible for energy generation. Confers resistance against macrolides. This chain is Macrolide export ATP-binding/permease protein MacB, found in Marinobacter nauticus (strain ATCC 700491 / DSM 11845 / VT8) (Marinobacter aquaeolei).